The sequence spans 387 residues: Cytochrome b (387 aa).

4 consecutive transmembrane segments (helical) span residues 32–52 (FGSL…LLAC), 76–98 (FLLR…LHIG), 113–133 (TWNI…LGYC), and 179–199 (FFSL…MHLI). The heme b site is built by His82 and His96. The heme b site is built by His183 and His197. His202 contacts a ubiquinone. Transmembrane regions (helical) follow at residues 225–245 (YLIK…YMAF), 289–309 (QLGV…PLLD), 321–341 (FGKF…WIGG), and 348–368 (FITI…ILIP).

The protein belongs to the cytochrome b family. As to quaternary structure, fungal cytochrome b-c1 complex contains 10 subunits; 3 respiratory subunits, 2 core proteins and 5 low-molecular weight proteins. Cytochrome b-c1 complex is a homodimer. The cofactor is heme b.

The protein resides in the mitochondrion inner membrane. Functionally, component of the ubiquinol-cytochrome c reductase complex (complex III or cytochrome b-c1 complex) that is part of the mitochondrial respiratory chain. The b-c1 complex mediates electron transfer from ubiquinol to cytochrome c. Contributes to the generation of a proton gradient across the mitochondrial membrane that is then used for ATP synthesis. This chain is Cytochrome b (cob), found in Schizosaccharomyces pombe (strain 972 / ATCC 24843) (Fission yeast).